The chain runs to 785 residues: Cullin-3 (785 aa).

A Cullin neddylation domain is found at 715-777 (SRKHQADACI…REYLQRQADN (63 aa)). A Glycyl lysine isopeptide (Lys-Gly) (interchain with G-Cter in NEDD8) cross-link involves residue Lys-729.

Belongs to the cullin family. Probable component of multiple cullin-RING-based BC3B (BTB-CUL3-BTB) E3 ubiquitin-protein ligase complexes formed by cul-3, rbx-1 and a variable BTB domain-containing protein as adapter and substrate recognition component. Interacts with btb1, btb2, btb3, nedd8 and pip1. Neddylated; enhancing the ubiquitin-ligase activity.

Its subcellular location is the cytoplasm. It functions in the pathway protein modification; protein ubiquitination. Probable core component of multiple cullin-RING-based BC3B (BTB-CUL3-BTB) E3 ubiquitin-protein ligase complexes which mediate the ubiquitination and subsequent proteasomal degradation of target proteins. As a scaffold protein may contribute to catalysis through positioning of the substrate and the ubiquitin-conjugating enzyme. The functional specificity of the BC3B complex depends on the substrate recognition component. Involved in ubiquitin-mediated degradation of btb3. The polypeptide is Cullin-3 (cul3) (Schizosaccharomyces pombe (strain 972 / ATCC 24843) (Fission yeast)).